The chain runs to 330 residues: Phenylalanine--tRNA ligase alpha subunit (330 aa).

Residue glutamate 255 participates in Mg(2+) binding.

Belongs to the class-II aminoacyl-tRNA synthetase family. Phe-tRNA synthetase alpha subunit type 1 subfamily. As to quaternary structure, tetramer of two alpha and two beta subunits. Requires Mg(2+) as cofactor.

The protein localises to the cytoplasm. It carries out the reaction tRNA(Phe) + L-phenylalanine + ATP = L-phenylalanyl-tRNA(Phe) + AMP + diphosphate + H(+). In Acinetobacter baylyi (strain ATCC 33305 / BD413 / ADP1), this protein is Phenylalanine--tRNA ligase alpha subunit.